A 426-amino-acid chain; its full sequence is Serine--tRNA ligase (426 aa).

L-serine is bound at residue 233–235; the sequence is TAE. 264-266 provides a ligand contact to ATP; the sequence is RSE. Glu287 provides a ligand contact to L-serine. Position 351-354 (351-354) interacts with ATP; sequence EISS. Ser387 contributes to the L-serine binding site.

This sequence belongs to the class-II aminoacyl-tRNA synthetase family. Type-1 seryl-tRNA synthetase subfamily. In terms of assembly, homodimer. The tRNA molecule binds across the dimer.

The protein localises to the cytoplasm. The catalysed reaction is tRNA(Ser) + L-serine + ATP = L-seryl-tRNA(Ser) + AMP + diphosphate + H(+). It catalyses the reaction tRNA(Sec) + L-serine + ATP = L-seryl-tRNA(Sec) + AMP + diphosphate + H(+). It functions in the pathway aminoacyl-tRNA biosynthesis; selenocysteinyl-tRNA(Sec) biosynthesis; L-seryl-tRNA(Sec) from L-serine and tRNA(Sec): step 1/1. In terms of biological role, catalyzes the attachment of serine to tRNA(Ser). Is also able to aminoacylate tRNA(Sec) with serine, to form the misacylated tRNA L-seryl-tRNA(Sec), which will be further converted into selenocysteinyl-tRNA(Sec). This is Serine--tRNA ligase from Clostridium tetani (strain Massachusetts / E88).